Reading from the N-terminus, the 447-residue chain is N-succinylarginine dihydrolase (447 aa).

Substrate contacts are provided by residues 19 to 28 (AGLSVGNKAS), N110, and 137 to 138 (HR). The active site involves E174. R213 contributes to the substrate binding site. H249 is an active-site residue. Substrate-binding residues include D251 and N365. C371 acts as the Nucleophile in catalysis.

Belongs to the succinylarginine dihydrolase family. In terms of assembly, homodimer.

It catalyses the reaction N(2)-succinyl-L-arginine + 2 H2O + 2 H(+) = N(2)-succinyl-L-ornithine + 2 NH4(+) + CO2. Its pathway is amino-acid degradation; L-arginine degradation via AST pathway; L-glutamate and succinate from L-arginine: step 2/5. In terms of biological role, catalyzes the hydrolysis of N(2)-succinylarginine into N(2)-succinylornithine, ammonia and CO(2). The chain is N-succinylarginine dihydrolase from Photorhabdus laumondii subsp. laumondii (strain DSM 15139 / CIP 105565 / TT01) (Photorhabdus luminescens subsp. laumondii).